We begin with the raw amino-acid sequence, 167 residues long: Regulatory protein RecX (167 aa).

Residues 19–49 form a disordered region; it reads ESELRRKLASQPFSAKGHWGKQTGRSDNEPV.

The protein belongs to the RecX family.

It is found in the cytoplasm. Modulates RecA activity. This is Regulatory protein RecX from Yersinia enterocolitica serotype O:8 / biotype 1B (strain NCTC 13174 / 8081).